The sequence spans 129 residues: UPF0148 protein APE_0207 (129 aa).

Belongs to the UPF0148 family.

In Aeropyrum pernix (strain ATCC 700893 / DSM 11879 / JCM 9820 / NBRC 100138 / K1), this protein is UPF0148 protein APE_0207.